The following is a 137-amino-acid chain: MMQPKKTKFRKAHKGRIHGVASSGATLAFGQFGLKAMEPDRVTARQIEAARRALTRHMKRAGRVWIRVFPDLPVSKKPAEVRMGSGKGSPELWVARVKPGRVMFEIDGVSNQIAREALTLAAAKLPIKTRFVERIAE.

Belongs to the universal ribosomal protein uL16 family. As to quaternary structure, part of the 50S ribosomal subunit.

In terms of biological role, binds 23S rRNA and is also seen to make contacts with the A and possibly P site tRNAs. This chain is Large ribosomal subunit protein uL16, found in Bradyrhizobium sp. (strain ORS 278).